We begin with the raw amino-acid sequence, 438 residues long: Innexin inx7 (438 aa).

The Cytoplasmic segment spans residues 1 to 23 (MLNTFSSVRQYLKFDLTRVVIDN). The helical transmembrane segment at 24-44 (IVFKLHYRWTFVILLVATLLI) threads the bilayer. Over 45 to 58 (TSRQYIGEHIQCLS) the chain is Extracellular. Residues 59-79 (DGVVSPVINTFCFFTPTFTVV) traverse the membrane as a helical segment. At 80 to 112 (RDQNQTAYRPGSEPPGIGAFDPEKDTIKRHAYY) the chain is on the cytoplasmic side. A helical membrane pass occupies residues 113 to 133 (QWVPFVLFFQALCFYIPHALW). Topologically, residues 134-283 (KSWEGGRIKA…VMALNIMNEK (150 aa)) are extracellular. Residues 284–304 (IYIILWFWYAFLLIVTVLGLL) traverse the membrane as a helical segment. Topologically, residues 305-438 (WRILTLCFYR…STSDMAKLPV (134 aa)) are cytoplasmic. 2 disordered regions span residues 381–402 (NDVN…PELS) and 415–438 (RRNG…KLPV). Positions 418-431 (GSPSAGGAQGPSTS) are enriched in low complexity.

It belongs to the pannexin family. In terms of tissue distribution, expressed around gut lobes in embryonic stages 15-17.

The protein resides in the cell membrane. The protein localises to the cell junction. It is found in the gap junction. In terms of biological role, structural components of the gap junctions. The sequence is that of Innexin inx7 (Inx7) from Drosophila melanogaster (Fruit fly).